A 361-amino-acid chain; its full sequence is Putative agmatine deiminase (361 aa).

Cys354 (amidino-cysteine intermediate) is an active-site residue.

The protein belongs to the agmatine deiminase family.

It catalyses the reaction agmatine + H2O = N-carbamoylputrescine + NH4(+). The sequence is that of Putative agmatine deiminase from Streptococcus pneumoniae (strain Hungary19A-6).